A 175-amino-acid chain; its full sequence is ATP synthase subunit delta (175 aa).

Belongs to the ATPase delta chain family. In terms of assembly, F-type ATPases have 2 components, F(1) - the catalytic core - and F(0) - the membrane proton channel. F(1) has five subunits: alpha(3), beta(3), gamma(1), delta(1), epsilon(1). F(0) has three main subunits: a(1), b(2) and c(10-14). The alpha and beta chains form an alternating ring which encloses part of the gamma chain. F(1) is attached to F(0) by a central stalk formed by the gamma and epsilon chains, while a peripheral stalk is formed by the delta and b chains.

Its subcellular location is the cell inner membrane. In terms of biological role, f(1)F(0) ATP synthase produces ATP from ADP in the presence of a proton or sodium gradient. F-type ATPases consist of two structural domains, F(1) containing the extramembraneous catalytic core and F(0) containing the membrane proton channel, linked together by a central stalk and a peripheral stalk. During catalysis, ATP synthesis in the catalytic domain of F(1) is coupled via a rotary mechanism of the central stalk subunits to proton translocation. Functionally, this protein is part of the stalk that links CF(0) to CF(1). It either transmits conformational changes from CF(0) to CF(1) or is implicated in proton conduction. The protein is ATP synthase subunit delta of Stenotrophomonas maltophilia (strain R551-3).